The chain runs to 240 residues: tRNA (guanine-N(1)-)-methyltransferase (240 aa).

Residues glycine 110 and 130-135 each bind S-adenosyl-L-methionine; that span reads IGDYVL.

The protein belongs to the RNA methyltransferase TrmD family. In terms of assembly, homodimer.

The protein localises to the cytoplasm. It catalyses the reaction guanosine(37) in tRNA + S-adenosyl-L-methionine = N(1)-methylguanosine(37) in tRNA + S-adenosyl-L-homocysteine + H(+). Specifically methylates guanosine-37 in various tRNAs. This Macrococcus caseolyticus (strain JCSC5402) (Macrococcoides caseolyticum) protein is tRNA (guanine-N(1)-)-methyltransferase.